Here is a 649-residue protein sequence, read N- to C-terminus: MHVVLPDGKQLELPMGATALDAASAIGPRLAQDALAATANGELVDLMTPLPDGASITLITKKNPGDAAPLFRHSLGHVMSQAVGEYYRAKGYSDDRIKRGVGPSIENGWYQDFDLPEPLREEDLPEIEKIMREILSRNLAFRRREVSKAEGLAQFPHDPYKQELIQGLPDDEPITFYQQGDYVDLCRGPHFPSTGRLPGAFKLMSTSGAYWRGNEKNPILQRVYGVAFASQKELDEYLHQLEEAKRRDHRKLGRELELFTIDPLVGKGLPLWLPNGTVLREELAGFLKEQQFRRGYQGVITPNIGNLELYKTSGHYPYYADGQFNPIEVDDEQYMLKPMNCPHHVRIYASKPRSYRDLPVRLAEFGTVYRYEQSGELNGLTRVRGFTQDDAHLFCRPDQLKKEFLDVLDLTVLVLKTFGMNDVRFRVGTRDPESDKYVGDEANWELAERQILEAVDEVGLPYTIEPGDAAFYGPKLDFVVKDVLGREWQLGTIQVDYNLPERFDISYVGEDGQDHRPIMIHRAPFGSLERFVGILIEHYAGDFPLWLAPRQVMIIPIADRHNEYAEELRSELHAAGLRAEVDDSSNRMQAKVRTAELSKIPVMLIVGDKEQEARQVSVRERSVEGHKERKGVAFDDLCAELLERYRARI.

The 60-residue stretch at 1–60 (MHVVLPDGKQLELPMGATALDAASAIGPRLAQDALAATANGELVDLMTPLPDGASITLIT) folds into the TGS domain. The interval 248–544 (DHRKLGRELE…LIEHYAGDFP (297 aa)) is catalytic. Residues cysteine 341, histidine 392, and histidine 521 each contribute to the Zn(2+) site.

It belongs to the class-II aminoacyl-tRNA synthetase family. In terms of assembly, homodimer. Requires Zn(2+) as cofactor.

The protein localises to the cytoplasm. It catalyses the reaction tRNA(Thr) + L-threonine + ATP = L-threonyl-tRNA(Thr) + AMP + diphosphate + H(+). In terms of biological role, catalyzes the attachment of threonine to tRNA(Thr) in a two-step reaction: L-threonine is first activated by ATP to form Thr-AMP and then transferred to the acceptor end of tRNA(Thr). Also edits incorrectly charged L-seryl-tRNA(Thr). This Deinococcus deserti (strain DSM 17065 / CIP 109153 / LMG 22923 / VCD115) protein is Threonine--tRNA ligase.